The chain runs to 1396 residues: MAITKIILQQMVTMDQNSITASKYPKYTVVLSNSISSITAADVTSAIESSKASGPAAKQSEINAKQSELNAKDSENEAEISATSSQQSATQSASSATASANSAKAAKTSETNANNSKNAAKTSETNAASSASSASSFATAAENSARAAKTSETNAGNSAQAADASKTAAANSATAAKTSETNAKKSETAAKTSETNAKTSENKAKEYLDMASELVSPVTQYDWPVGTNNNSVYVKIAKLTDPGAVSCHLTLMITNGGNYGSSYGNIDFVEISARGLNDARGVTSENITKFLSVRRLGSPNLAWDNQLRYGLVEGDGYFEVWCYQRAFIKETRVAVLAQTGRTELYIPEGFVSQDTQPSGFIESLAARIYDQVNKPTKADLGLENAMLVGAFGLGGNGLSYSSVQSNVDLINKLKANGGQYWRAARESGANVDINDHGSGFYSHCGDTHAAINVQYNTGIVKVLATTDRNLASDIVYANTLYGTANKPSKSDVGLGNVTNDAQVKKAGDVMSGDLDIRKETPSIRLKSTQGNAHLWFMNNDGGERGVIWSPPNNGSLGEIHIRAKTSDGTSTGDFIVRHDGRIEAKDAKISYKISSRTAEFSNDDTNTAATNLRVSGKQHTPIMLVRDSDSNVSVGFKLNNMNAKLLGIDIDGDLAFGENPDHKQNSKIVTRKMMDAGFSVAGLMDFTNGFAGPWEAKNISDQELDLNSLMIKKSDPGSIRVYQCVSAGGGNNITNKPSGIGGNFILYVESIRKVGDTDFTNRQRLFGTDLNREFTRYCSNGTWSAWRESVVSGMNQDVSVKSMSVSGRLSGNELSVGGAGVLNGNLGVGGGATSKMPSSDKGIVIGRGSIVREGGEGRLILSSSGGTDRLLQLRPAGATSLDNQVEISCTSASAGDTKISFGQGAAIRCNNAGSPIISAKAGQMIYFRPNGDGISEGQMILSPNGDLVVKGGVNSKEIDVTASQSLPLKETTATTGIGVNFIGDSATECSFGIENTAGGSAVFHNYTRGASNSVTKNNQLLGGYGSRPWLGSTYTEHSNAALHFLGAGDTSATNHGGWIRLLVTPKGKTISDRVPAFRLSDNGDLWLVPDGAMHSDLGLVRSIETLNAAVPRFNAPSIQDGRGLKIVAPQAPEIDLIAPRGSGASAPAIRAMWCDGSLADTTRYIGATQPGSTFYIGASGHDGEKFDSMRGSVAIKSAGGWGPTSTPTQVVLETCESGSISRLPRWGVDHNGTLMPMADNRYNLGWGSGRVKQVYAVNGTINTSDARLKNDVRAMSDPETEAAKAIAKEIGFWTWKEQADMNDIREHCGLTVQRAIEIMESFGLDPFKYGFICYDKWDEHTVVSEYGPANEDGTENPIYKTIPAGDHYSFRLEELNLFIAKGFEARLSAIEDKLGM.

Disordered stretches follow at residues 51-133 and 145-203; these read KASG…SASS and ARAA…SENK. A compositionally biased stretch (polar residues) spans 60 to 69; sequence SEINAKQSEL. Composition is skewed to low complexity over residues 81-133 and 157-181; these read SATS…SASS and NSAQ…TSET. Coiled coils occupy residues 187–214 and 1263–1396; these read ETAA…ASEL and TSDA…KLGM. Residues 189 to 199 are compositionally biased toward polar residues; the sequence is AAKTSETNAKT. In terms of domain architecture, Peptidase S74 spans 1265–1394; sequence DARLKNDVRA…ARLSAIEDKL (130 aa).

As to quaternary structure, homotrimer. Interacts with the O-antigens of host lipopolysaccharides. The cleaved C-terminus functions as an intramolecular chaperone and is removed by an autoproteolytic process after correct trimerization and folding.

Its subcellular location is the virion. Assembles together with p132 to form the three L-shaped long tail fibers and the collar structure at the junction between the tail tube and the conical tail tip. The three L-shaped long tail fibers recognize the host lipopolysaccharides that serve as adhesion receptor for virus entry. Each fiber consists of a thin proximal rod of about 30 nm connected by a hinge to a thicker distal part of about 47 nm. The protein is Side tail fiber protein pb1 of Escherichia coli (Enterobacteria phage T5).